Here is a 281-residue protein sequence, read N- to C-terminus: Putrescine transport system permease protein PotI (281 aa).

Residues 1 to 13 are Cytoplasmic-facing; that stretch reads MNNLPVVRSPWRI. A helical transmembrane segment spans residues 14–33; that stretch reads VILLLGFTFLYAPMLMLVIY. Topologically, residues 34–68 are periplasmic; that stretch reads SFNSSKLVTVWAGWSTRWYGELLRDDAMMSAVGLS. The ABC transmembrane type-1 domain maps to 65–260; sequence VGLSLTIAAC…GAVGIVGFIA (196 aa). The helical transmembrane segment at 69–88 threads the bilayer; the sequence is LTIAACAATAAAILGTIAAV. The Cytoplasmic segment spans residues 89–115; that stretch reads VLVRFGRFRGSNGFAFMITAPLVMPDV. A helical transmembrane segment spans residues 116 to 135; sequence ITGLSLLLLFVALAHAIGWP. Topologically, residues 136 to 140 are periplasmic; that stretch reads ADRGM. The helical transmembrane segment at 141–160 threads the bilayer; sequence LTIWLAHVTFCTAYVAVVIS. Residues 161-186 lie on the Cytoplasmic side of the membrane; it reads SRLRELDRSIEEAAMDLGATPLKVFF. Residues 187–206 traverse the membrane as a helical segment; the sequence is VITLPMIMPAIISGWLLAFT. Residues 207-243 lie on the Periplasmic side of the membrane; that stretch reads LSLDDLVIASFVSGPGATTLPMLVFSSVRMGVNPEIN. Residues 244–263 traverse the membrane as a helical segment; the sequence is ALATLILGAVGIVGFIAWYL. Topologically, residues 264-281 are cytoplasmic; it reads MARAEKQRIRDIQRARRG.

Belongs to the binding-protein-dependent transport system permease family. CysTW subfamily. In terms of assembly, the complex is composed of two ATP-binding proteins (PotG), two transmembrane proteins (PotH and PotI) and a solute-binding protein (PotF).

Its subcellular location is the cell inner membrane. Functionally, part of the ABC transporter complex PotFGHI involved in putrescine uptake. Responsible for the translocation of the substrate across the membrane. This chain is Putrescine transport system permease protein PotI, found in Escherichia coli O6:H1 (strain CFT073 / ATCC 700928 / UPEC).